We begin with the raw amino-acid sequence, 520 residues long: 2-isopropylmalate synthase (520 aa).

A Pyruvate carboxyltransferase domain is found at 12–274; the sequence is VVIFDTTLRD…DTGIDTTMLT (263 aa). Positions 21, 209, 211, and 245 each coordinate Mn(2+). The tract at residues 398–520 is regulatory domain; sequence KLLSLSVIAG…RLHAQHAAVV (123 aa).

Belongs to the alpha-IPM synthase/homocitrate synthase family. LeuA type 1 subfamily. As to quaternary structure, homodimer. The cofactor is Mn(2+).

The protein resides in the cytoplasm. The enzyme catalyses 3-methyl-2-oxobutanoate + acetyl-CoA + H2O = (2S)-2-isopropylmalate + CoA + H(+). It functions in the pathway amino-acid biosynthesis; L-leucine biosynthesis; L-leucine from 3-methyl-2-oxobutanoate: step 1/4. In terms of biological role, catalyzes the condensation of the acetyl group of acetyl-CoA with 3-methyl-2-oxobutanoate (2-ketoisovalerate) to form 3-carboxy-3-hydroxy-4-methylpentanoate (2-isopropylmalate). This is 2-isopropylmalate synthase from Methylorubrum populi (strain ATCC BAA-705 / NCIMB 13946 / BJ001) (Methylobacterium populi).